The chain runs to 214 residues: Leucyl/phenylalanyl-tRNA--protein transferase (214 aa).

It belongs to the L/F-transferase family.

Its subcellular location is the cytoplasm. It catalyses the reaction N-terminal L-lysyl-[protein] + L-leucyl-tRNA(Leu) = N-terminal L-leucyl-L-lysyl-[protein] + tRNA(Leu) + H(+). The catalysed reaction is N-terminal L-arginyl-[protein] + L-leucyl-tRNA(Leu) = N-terminal L-leucyl-L-arginyl-[protein] + tRNA(Leu) + H(+). The enzyme catalyses L-phenylalanyl-tRNA(Phe) + an N-terminal L-alpha-aminoacyl-[protein] = an N-terminal L-phenylalanyl-L-alpha-aminoacyl-[protein] + tRNA(Phe). Its function is as follows. Functions in the N-end rule pathway of protein degradation where it conjugates Leu, Phe and, less efficiently, Met from aminoacyl-tRNAs to the N-termini of proteins containing an N-terminal arginine or lysine. The sequence is that of Leucyl/phenylalanyl-tRNA--protein transferase from Cereibacter sphaeroides (strain KD131 / KCTC 12085) (Rhodobacter sphaeroides).